A 241-amino-acid chain; its full sequence is Uridylate kinase (241 aa).

ATP is bound by residues 10–13 (KLSG), Gly53, and Arg57. Residues Asp72 and 133–140 (AGSPYFST) contribute to the UMP site. The ATP site is built by Asn161, Tyr167, and Asp170.

This sequence belongs to the UMP kinase family. As to quaternary structure, homohexamer.

It localises to the cytoplasm. It carries out the reaction UMP + ATP = UDP + ADP. It participates in pyrimidine metabolism; CTP biosynthesis via de novo pathway; UDP from UMP (UMPK route): step 1/1. Inhibited by UTP. Catalyzes the reversible phosphorylation of UMP to UDP. The chain is Uridylate kinase from Onion yellows phytoplasma (strain OY-M).